The sequence spans 404 residues: ORC1-type DNA replication protein 2 (404 aa).

ATP contacts are provided by residues 64-68 (TGKTS), Tyr205, and Arg217.

It belongs to the CDC6/cdc18 family. In terms of assembly, interacts with MCM.

Its function is as follows. Involved in regulation of DNA replication. Stimulates the helicase activity of MCM via stimulation of its ATPase activity. Binding to MCM may result in conformational changes in MCM, leading to catalytic ATP hydrolysis by the helicase. Directly stimulates MCM movement along single-stranded and double-stranded DNA. Does not bind DNA. The sequence is that of ORC1-type DNA replication protein 2 (cdc6-2) from Thermoplasma acidophilum (strain ATCC 25905 / DSM 1728 / JCM 9062 / NBRC 15155 / AMRC-C165).